We begin with the raw amino-acid sequence, 489 residues long: N-succinylglutamate 5-semialdehyde dehydrogenase 1 (489 aa).

223–228 (GSSRTG) is a binding site for NAD(+). Catalysis depends on residues Glu246 and Cys280.

The protein belongs to the aldehyde dehydrogenase family. AstD subfamily.

The catalysed reaction is N-succinyl-L-glutamate 5-semialdehyde + NAD(+) + H2O = N-succinyl-L-glutamate + NADH + 2 H(+). It functions in the pathway amino-acid degradation; L-arginine degradation via AST pathway; L-glutamate and succinate from L-arginine: step 4/5. Catalyzes the NAD-dependent reduction of succinylglutamate semialdehyde into succinylglutamate. In Pseudoalteromonas translucida (strain TAC 125), this protein is N-succinylglutamate 5-semialdehyde dehydrogenase 1.